A 478-amino-acid chain; its full sequence is Cysteine--tRNA ligase (478 aa).

Zn(2+) is bound at residue Cys-29. The short motif at 31–41 (PTVYDIPHIGN) is the 'HIGH' region element. Residues Cys-216, His-241, and Glu-245 each contribute to the Zn(2+) site. A 'KMSKS' region motif is present at residues 274-278 (KMSKS). An ATP-binding site is contributed by Lys-277.

It belongs to the class-I aminoacyl-tRNA synthetase family. As to quaternary structure, monomer. Zn(2+) serves as cofactor.

Its subcellular location is the cytoplasm. It carries out the reaction tRNA(Cys) + L-cysteine + ATP = L-cysteinyl-tRNA(Cys) + AMP + diphosphate. The sequence is that of Cysteine--tRNA ligase from Orientia tsutsugamushi (strain Ikeda) (Rickettsia tsutsugamushi).